Reading from the N-terminus, the 234-residue chain is Ribosome-inactivating protein lychnin (234 aa).

The cysteines at positions 32 and 115 are disulfide-linked. The active site involves E170.

As to quaternary structure, monomer.

The enzyme catalyses Endohydrolysis of the N-glycosidic bond at one specific adenosine on the 28S rRNA.. Ribosome-inactivating protein of type 1, inhibits protein synthesis in animal cells. Inhibits cell-free translation in rabbit reticulocyte lysate system with an IC(50) of 0.17 nM. This Silene chalcedonica (Maltese-cross) protein is Ribosome-inactivating protein lychnin.